A 658-amino-acid chain; its full sequence is MSHVVVKNDPELDQQLANLDLNSEKQSGGASTASKGRYIPPHLRNREASKGFHDKDSSGWSCSKDKDAYSSFGSRDSRGKSGYFSERGSGSRGRFDDRGRSDYDGIGNRDRPGFGRFERSGHSRWCDKSDEDDWSKPLPPSERLEQELFSGGNTGINFEKYDDIPVEATGSNCPPHIENFSDIDMGEIIMGNIELTRYTRPTPVQKHAIPIIKGKRDLMACAQTGSGKTAAFLLPILSQIYTDGPGEALKAVKENGRYGRRKQYPISLVLAPTRELAVQIYEEARKFSYRSRVRPCVVYGGADIGQQIRDLERGCHLLVATPGRLVDMMERGKIGLDFCKYLVLDEADRMLDMGFEPQIRRIVEQDTMPPKGVRHTMMFSATFPKEIQMLARDFLDEYIFLAVGRVGSTSENITQKVVWVEDLDKRSFLLDLLGATGRDSLTLVFVETKKGADSLEDFLYHEGYACTSIHGDRSQRDREEALHQFRSGKSPILVATAVAARGLDISNVRHVINFDLPSDIEEYVHRIGRTGRVGNLGLATSFFNEKNMNITKDLLDLLVEAKQEVPSWLENMAYEHHYKGGSRGRSKRFSGGFGARDYRQSSGSSSSGFGASRGSSSRSGGSGYGNSRGFGGGGYGGFYNSDGYGGNYNSQGVDWWGN.

Residues 1-10 (MSHVVVKNDP) are compositionally biased toward basic and acidic residues. Positions 1 to 141 (MSHVVVKNDP…DDWSKPLPPS (141 aa)) are disordered. Ser2 bears the N-acetylserine mark. The span at 15–34 (QLANLDLNSEKQSGGASTAS) shows a compositional bias: polar residues. Positions 44–68 (RNREASKGFHDKDSSGWSCSKDKDA) are enriched in basic and acidic residues. An N6-acetyllysine modification is found at Lys55. Residues Ser81, Ser85, and Ser89 each carry the phosphoserine modification. The span at 93 to 128 (GRFDDRGRSDYDGIGNRDRPGFGRFERSGHSRWCDK) shows a compositional bias: basic and acidic residues. Omega-N-methylarginine is present on Arg100. A Phosphoserine modification is found at Ser101. A Phosphotyrosine modification is found at Tyr103. Position 109 is an omega-N-methylarginine (Arg109). 2 positions are modified to phosphoserine: Ser129 and Ser181. The short motif at 178-206 (ENFSDIDMGEIIMGNIELTRYTRPTPVQK) is the Q motif element. 198–205 (YTRPTPVQ) serves as a coordination point for ATP. The Helicase ATP-binding domain maps to 209–401 (IPIIKGKRDL…RDFLDEYIFL (193 aa)). Lys213 participates in a covalent cross-link: Glycyl lysine isopeptide (Lys-Gly) (interchain with G-Cter in SUMO2). Position 222 to 229 (222 to 229 (AQTGSGKT)) interacts with ATP. A DEAD box motif is present at residues 345–348 (DEAD). One can recognise a Helicase C-terminal domain in the interval 412-573 (NITQKVVWVE…EVPSWLENMA (162 aa)). The residue at position 454 (Ser454) is a Phosphoserine. Arg588 carries the omega-N-methylarginine modification. Residues Ser590 and Ser601 each carry the phosphoserine modification. Positions 597-625 (DYRQSSGSSSSGFGASRGSSSRSGGSGYG) are disordered. Over residues 601 to 619 (SSGSSSSGFGASRGSSSRS) the composition is skewed to low complexity. Residues Arg613 and Arg628 each carry the omega-N-methylarginine modification.

The protein belongs to the DEAD box helicase family. DDX3/DED1 subfamily. May interact with TDRD3.

It is found in the cytoplasm. It localises to the nucleus. The enzyme catalyses ATP + H2O = ADP + phosphate + H(+). Functionally, probable ATP-dependent RNA helicase. May play a role in spermatogenesis. The protein is ATP-dependent RNA helicase DDX3Y (DDX3Y) of Pongo abelii (Sumatran orangutan).